We begin with the raw amino-acid sequence, 1237 residues long: Putative structural protein VP3 (1237 aa).

In terms of domain architecture, PPPDE spans G963–Q1178. Residues H1001 and C1149 contribute to the active site.

It is found in the virion. The polypeptide is Putative structural protein VP3 (S3) (Lymantria dispar cypovirus 1 (isolate Rao) (LdCPV-1)).